Here is a 216-residue protein sequence, read N- to C-terminus: Adenylate kinase (216 aa).

10–15 provides a ligand contact to ATP; the sequence is GAGKGT. An NMP region spans residues 30 to 59; sequence STGDIFRAHMSQGTPLGKLAKEYVDAGKYV. AMP-binding positions include Thr31, Arg36, 57-59, 85-88, and Gln92; these read KYV and GYPR. The interval 126–163 is LID; the sequence is GRRVCRSCGATYHVRFNPPREAGRCDRCGGELYQRSDD. ATP is bound at residue Arg127. Residues Cys130 and Cys133 each contribute to the Zn(2+) site. 136–137 provides a ligand contact to ATP; that stretch reads TY. The Zn(2+) site is built by Cys150 and Cys153. Residues Arg160 and Arg171 each coordinate AMP. An ATP-binding site is contributed by Gln199.

This sequence belongs to the adenylate kinase family. In terms of assembly, monomer.

Its subcellular location is the cytoplasm. It carries out the reaction AMP + ATP = 2 ADP. It functions in the pathway purine metabolism; AMP biosynthesis via salvage pathway; AMP from ADP: step 1/1. Its function is as follows. Catalyzes the reversible transfer of the terminal phosphate group between ATP and AMP. Plays an important role in cellular energy homeostasis and in adenine nucleotide metabolism. The protein is Adenylate kinase of Symbiobacterium thermophilum (strain DSM 24528 / JCM 14929 / IAM 14863 / T).